The chain runs to 152 residues: Small ribosomal subunit protein uS15 (152 aa).

Residues 1 to 11 (MARMHARRRGK) show a composition bias toward basic residues. Positions 1-25 (MARMHARRRGKSSSVRPARNEAPAW) are disordered.

This sequence belongs to the universal ribosomal protein uS15 family. Part of the 30S ribosomal subunit.

The protein is Small ribosomal subunit protein uS15 of Methanoregula boonei (strain DSM 21154 / JCM 14090 / 6A8).